Consider the following 555-residue polypeptide: Hdr-like menaquinol oxidoreductase iron-sulfur subunit 2 (555 aa).

4Fe-4S ferredoxin-type domains lie at 82–111 (RSFK…GDPK) and 151–180 (KELY…AEIV). [4Fe-4S] cluster is bound by residues Cys-91, Cys-94, Cys-97, Cys-101, Cys-160, Cys-163, Cys-166, and Cys-170.

Consists of five subunits: an integral membrane subunit, a cytochrome b-like subunit, a cytochrome c subunit and two iron-sulfur subunits. [4Fe-4S] cluster serves as cofactor.

Its subcellular location is the cell membrane. Functionally, has menaquinol-oxidizing activity. HmeC and HmeD subunits may together mediate electron transfer from menaquinol to an unidentified electron acceptor on the cytoplasmic side of the membrane. In Archaeoglobus fulgidus (strain ATCC 49558 / DSM 4304 / JCM 9628 / NBRC 100126 / VC-16), this protein is Hdr-like menaquinol oxidoreductase iron-sulfur subunit 2 (hmeD).